Consider the following 175-residue polypeptide: ATP synthase subunit b (175 aa).

The helical transmembrane segment at 24 to 44 (LVLWQIAATVILIIVVRIFLW) threads the bilayer.

This sequence belongs to the ATPase B chain family. In terms of assembly, F-type ATPases have 2 components, F(1) - the catalytic core - and F(0) - the membrane proton channel. F(1) has five subunits: alpha(3), beta(3), gamma(1), delta(1), epsilon(1). F(0) has three main subunits: a(1), b(2) and c(10-14). The alpha and beta chains form an alternating ring which encloses part of the gamma chain. F(1) is attached to F(0) by a central stalk formed by the gamma and epsilon chains, while a peripheral stalk is formed by the delta and b chains.

It is found in the cell membrane. F(1)F(0) ATP synthase produces ATP from ADP in the presence of a proton or sodium gradient. F-type ATPases consist of two structural domains, F(1) containing the extramembraneous catalytic core and F(0) containing the membrane proton channel, linked together by a central stalk and a peripheral stalk. During catalysis, ATP synthesis in the catalytic domain of F(1) is coupled via a rotary mechanism of the central stalk subunits to proton translocation. Its function is as follows. Component of the F(0) channel, it forms part of the peripheral stalk, linking F(1) to F(0). This is ATP synthase subunit b from Acholeplasma laidlawii (strain PG-8A).